A 156-amino-acid polypeptide reads, in one-letter code: MGRFIFVSLGLLVLAFSLSGIGADQHCPSGWFSHNVSCYKLINDWKTWDEAQRFCMDEQENGQLASINDVGESVKLSDEISKTWSIIDVWIGLRLSKRKSIWEWIDGSNVTQTRWEEGEPNNFLKKEFCVVLTSRSRYLKWNDKDCNRRHRFLCKF.

The first 23 residues, methionine 1–alanine 23, serve as a signal peptide directing secretion. 3 disulfides stabilise this stretch: cysteine 27–cysteine 38, cysteine 55–cysteine 154, and cysteine 129–cysteine 146. The region spanning histidine 34–lysine 155 is the C-type lectin domain. N-linked (GlcNAc...) asparagine glycosylation is found at asparagine 35 and asparagine 109. Residues glutamate 119–asparagine 121 carry the Mannose-binding motif. Ca(2+)-binding residues include glutamate 127, asparagine 142, and aspartate 143.

The protein belongs to the true venom lectin family. As to expression, expressed by the venom gland.

The protein resides in the secreted. Functionally, mannose-binding lectin which recognizes specific carbohydrate structures and agglutinates a variety of animal cells by binding to cell-surface glycoproteins and glycolipids. May be a calcium-dependent lectin. This chain is C-type lectin lectoxin-Phi1, found in Philodryas olfersii (Green snake).